The sequence spans 234 residues: Probable GTP-binding protein EngB (234 aa).

Residues 23-209 form the EngB-type G domain; sequence AVPEVAFAGR…QRTVAGWLCL (187 aa). Residues 31–38, 58–62, 82–85, 149–152, and 187–190 each bind GTP; these read GRSNAGKS, GRTQH, DLPG, TKAD, and LFSS. Mg(2+) is bound by residues Ser38 and Thr60. Residues 210 to 234 form a disordered region; it reads PEAMPPSPDAEPAKKTPSPDAQRGE.

Belongs to the TRAFAC class TrmE-Era-EngA-EngB-Septin-like GTPase superfamily. EngB GTPase family. The cofactor is Mg(2+).

Necessary for normal cell division and for the maintenance of normal septation. In Ralstonia nicotianae (strain ATCC BAA-1114 / GMI1000) (Ralstonia solanacearum), this protein is Probable GTP-binding protein EngB.